The chain runs to 214 residues: Large ribosomal subunit protein uL3 (214 aa).

This sequence belongs to the universal ribosomal protein uL3 family. In terms of assembly, part of the 50S ribosomal subunit. Forms a cluster with proteins L14 and L19.

In terms of biological role, one of the primary rRNA binding proteins, it binds directly near the 3'-end of the 23S rRNA, where it nucleates assembly of the 50S subunit. This Streptomyces coelicolor (strain ATCC BAA-471 / A3(2) / M145) protein is Large ribosomal subunit protein uL3.